A 329-amino-acid chain; its full sequence is UPF0421 protein SH1063 (329 aa).

A run of 5 helical transmembrane segments spans residues 25–45 (LFCL…IVTI), 60–80 (LPAT…FGDP), 87–107 (FSAL…GTTV), 108–128 (AVLT…FNFF), and 131–151 (LLTA…VLPP).

It belongs to the UPF0421 family.

Its subcellular location is the cell membrane. This chain is UPF0421 protein SH1063, found in Staphylococcus haemolyticus (strain JCSC1435).